Consider the following 152-residue polypeptide: Ribosomal RNA large subunit methyltransferase H (152 aa).

S-adenosyl-L-methionine contacts are provided by residues L68, G100, and 119 to 124 (FGPMTW).

The protein belongs to the RNA methyltransferase RlmH family. In terms of assembly, homodimer.

The protein localises to the cytoplasm. It catalyses the reaction pseudouridine(1915) in 23S rRNA + S-adenosyl-L-methionine = N(3)-methylpseudouridine(1915) in 23S rRNA + S-adenosyl-L-homocysteine + H(+). Its function is as follows. Specifically methylates the pseudouridine at position 1915 (m3Psi1915) in 23S rRNA. The polypeptide is Ribosomal RNA large subunit methyltransferase H (Rhodospirillum centenum (strain ATCC 51521 / SW)).